Reading from the N-terminus, the 256-residue chain is Coiled-coil domain-containing protein 90B, mitochondrial (256 aa).

The transit peptide at 1–42 (MRSRWIWRFLRPDGGGIRWTSTPHGRLSPALRRGFLTTTTKS) directs the protein to the mitochondrion. Residues 129-167 (LEKSEFANLRAENEKMKIELDQVKQQLTNETSRIRADNK) adopt a coiled-coil conformation. Residues 231–253 (TIRYLAASVFTCLAIALGFYRFW) form a helical membrane-spanning segment.

It belongs to the CCDC90 family. Interacts with MCU.

It localises to the mitochondrion membrane. The polypeptide is Coiled-coil domain-containing protein 90B, mitochondrial (Ccdc90b) (Mus musculus (Mouse)).